The following is a 411-amino-acid chain: Lysosome-associated membrane glycoprotein 3 (411 aa).

Positions 1 to 21 (MPGQISAVAVLFLSLTVILHG) are cleaved as a signal peptide. Residues 22 to 376 (YQIREKEFPK…NVNECLSDYT (355 aa)) lie on the Lumenal side of the membrane. The span at 172 to 192 (HKSTTNQRPTLSTNVLGTSTP) shows a compositional bias: polar residues. The disordered stretch occupies residues 172 to 204 (HKSTTNQRPTLSTNVLGTSTPTHKDRSTTSPVP). N227 carries an N-linked (GlcNAc...) asparagine glycan. Cystine bridges form between C232/C269 and C334/C371. The chain crosses the membrane as a helical span at residues 377–397 (VVLPMVAIIVVVICVVGLSVY). Residues 398 to 411 (KIRQRHQSSAYQRI) are Cytoplasmic-facing.

It belongs to the LAMP family. In terms of assembly, monomer. Interacts with FURIN.

It localises to the cell surface. The protein resides in the lysosome membrane. The protein localises to the cytoplasmic vesicle membrane. Its subcellular location is the early endosome membrane. Lysosomal membrane glycoprotein which plays a role in the unfolded protein response (UPR) that contributes to protein degradation and cell survival during proteasomal dysfunction. Plays a role in the process of fusion of the lysosome with the autophagosome, thereby modulating the autophagic process. Promotes hepatocellular lipogenesis through activation of the PI3K/Akt pathway. May also play a role in dendritic cell function and in adaptive immunity. In Mus musculus (Mouse), this protein is Lysosome-associated membrane glycoprotein 3 (Lamp3).